Reading from the N-terminus, the 492-residue chain is ATP synthase subunit beta, chloroplastic (492 aa).

170–177 (GGAGVGKT) is a binding site for ATP.

Belongs to the ATPase alpha/beta chains family. As to quaternary structure, F-type ATPases have 2 components, CF(1) - the catalytic core - and CF(0) - the membrane proton channel. CF(1) has five subunits: alpha(3), beta(3), gamma(1), delta(1), epsilon(1). CF(0) has four main subunits: a(1), b(1), b'(1) and c(9-12).

Its subcellular location is the plastid. It localises to the chloroplast thylakoid membrane. The enzyme catalyses ATP + H2O + 4 H(+)(in) = ADP + phosphate + 5 H(+)(out). Functionally, produces ATP from ADP in the presence of a proton gradient across the membrane. The catalytic sites are hosted primarily by the beta subunits. This is ATP synthase subunit beta, chloroplastic from Anthoceros angustus (Hornwort).